Consider the following 386-residue polypeptide: Bifunctional enzyme IspD/IspF (386 aa).

The interval 1–230 (MNSVPSLPGQ…LEEQSMSVIP (230 aa)) is 2-C-methyl-D-erythritol 4-phosphate cytidylyltransferase. A 2-C-methyl-D-erythritol 2,4-cyclodiphosphate synthase region spans residues 231-386 (RTGMGFDVHR…AQAVATVVSG (156 aa)). Asp-237 and His-239 together coordinate a divalent metal cation. Residues 237–239 (DVH) and 263–264 (HS) contribute to the 4-CDP-2-C-methyl-D-erythritol 2-phosphate site. His-271 is a binding site for a divalent metal cation. 4-CDP-2-C-methyl-D-erythritol 2-phosphate-binding positions include 285–287 (DIG), 361–364 (TTTE), and Arg-371.

The protein in the N-terminal section; belongs to the IspD/TarI cytidylyltransferase family. IspD subfamily. This sequence in the C-terminal section; belongs to the IspF family. A divalent metal cation serves as cofactor.

The enzyme catalyses 2-C-methyl-D-erythritol 4-phosphate + CTP + H(+) = 4-CDP-2-C-methyl-D-erythritol + diphosphate. It catalyses the reaction 4-CDP-2-C-methyl-D-erythritol 2-phosphate = 2-C-methyl-D-erythritol 2,4-cyclic diphosphate + CMP. Its pathway is isoprenoid biosynthesis; isopentenyl diphosphate biosynthesis via DXP pathway; isopentenyl diphosphate from 1-deoxy-D-xylulose 5-phosphate: step 2/6. It functions in the pathway isoprenoid biosynthesis; isopentenyl diphosphate biosynthesis via DXP pathway; isopentenyl diphosphate from 1-deoxy-D-xylulose 5-phosphate: step 4/6. Functionally, bifunctional enzyme that catalyzes the formation of 4-diphosphocytidyl-2-C-methyl-D-erythritol from CTP and 2-C-methyl-D-erythritol 4-phosphate (MEP) (IspD), and catalyzes the conversion of 4-diphosphocytidyl-2-C-methyl-D-erythritol 2-phosphate (CDP-ME2P) to 2-C-methyl-D-erythritol 2,4-cyclodiphosphate (ME-CPP) with a corresponding release of cytidine 5-monophosphate (CMP) (IspF). The chain is Bifunctional enzyme IspD/IspF from Novosphingobium aromaticivorans (strain ATCC 700278 / DSM 12444 / CCUG 56034 / CIP 105152 / NBRC 16084 / F199).